A 78-amino-acid chain; its full sequence is Large ribosomal subunit protein bL28 (78 aa).

The segment at 1-27 (MSAYCQVTGRKPSFGKSVSHSHRRTNR) is disordered.

The protein belongs to the bacterial ribosomal protein bL28 family.

The protein is Large ribosomal subunit protein bL28 of Corynebacterium kroppenstedtii (strain DSM 44385 / JCM 11950 / CIP 105744 / CCUG 35717).